A 1030-amino-acid chain; its full sequence is Zinc finger and SCAN domain-containing protein 20 (1030 aa).

Positions 22 to 42 are disordered; it reads DSWGSDSRPEKESHSPVPGPE. The 83-residue stretch at 45–127 folds into the SCAN box domain; it reads RRCFRQFRYR…ALVEDWHREA (83 aa). Disordered stretches follow at residues 178-201, 213-285, 411-441, and 578-600; these read DLSKMPPESLKESAVLTPQAPTVP, GKSQ…DSAQ, SGGPGEAVALPRLGDSDTEMDDQDEGSWEPE, and TGLPGSGQSSTEADDQEAWGEME. Residues 225 to 240 show a composition bias toward basic and acidic residues; that stretch reads AKKEPCQDPAGGDRGD. Acidic residues-rich tracts occupy residues 426 to 441 and 589 to 600; these read SDTEMDDQDEGSWEPE and EADDQEAWGEME. The C2H2-type 1; degenerate zinc-finger motif lies at 697–719; the sequence is YGCDTRAKSFSRKVHFFAPQRTH. A C2H2-type 2; degenerate zinc finger spans residues 725 to 747; that stretch reads YKCLGSGKSFSDRANLSTHQRIH. 2 consecutive C2H2-type zinc fingers follow at residues 753–775 and 781–803; these read YRCLECGKSFNDPSNLITHQRTH and YKCGLCWKSFNQSSNLLKHQRVH. Disordered regions lie at residues 801–820 and 828–850; these read RVHLGGPPNQRDEPGENFGQ and WRRNSTQEGPKEPQNISMGADSP. 6 C2H2-type zinc fingers span residues 862–884, 890–912, 918–940, 946–968, 974–996, and 1002–1024; these read YSCPECGRCFSKSSALTSHQRIH, YECAVCGKSFSKSSSLANHRRTH, HKCADCGKCFSERSKLITHQRVH, YECPECGKFFRDRSNLITHQRIH, YKCRECGKCFNQSSSLIIHQRIH, and YKCTECGKDFNNSSHFSAHRRTH.

This sequence belongs to the krueppel C2H2-type zinc-finger protein family.

The protein resides in the nucleus. Functionally, may be involved in transcriptional regulation. This chain is Zinc finger and SCAN domain-containing protein 20 (Zscan20), found in Mus musculus (Mouse).